The primary structure comprises 198 residues: ATP synthase subunit b (198 aa).

Residues Pro25–Trp45 form a helical membrane-spanning segment.

This sequence belongs to the ATPase B chain family. As to quaternary structure, F-type ATPases have 2 components, F(1) - the catalytic core - and F(0) - the membrane proton channel. F(1) has five subunits: alpha(3), beta(3), gamma(1), delta(1), epsilon(1). F(0) has three main subunits: a(1), b(2) and c(10-14). The alpha and beta chains form an alternating ring which encloses part of the gamma chain. F(1) is attached to F(0) by a central stalk formed by the gamma and epsilon chains, while a peripheral stalk is formed by the delta and b chains.

The protein resides in the cell membrane. F(1)F(0) ATP synthase produces ATP from ADP in the presence of a proton or sodium gradient. F-type ATPases consist of two structural domains, F(1) containing the extramembraneous catalytic core and F(0) containing the membrane proton channel, linked together by a central stalk and a peripheral stalk. During catalysis, ATP synthesis in the catalytic domain of F(1) is coupled via a rotary mechanism of the central stalk subunits to proton translocation. In terms of biological role, component of the F(0) channel, it forms part of the peripheral stalk, linking F(1) to F(0). The sequence is that of ATP synthase subunit b from Frankia alni (strain DSM 45986 / CECT 9034 / ACN14a).